Consider the following 332-residue polypeptide: Transcription factor HBP-1b(c38) (332 aa).

A disordered region spans residues 1-48; it reads MAEASPRTETSTDDTDENLMLEPGNAALAVVSDSSDRSRDKNGDQKTM. Residues 34–47 show a composition bias toward basic and acidic residues; sequence SSDRSRDKNGDQKT. Positions 44 to 107 constitute a bZIP domain; that stretch reads DQKTMRRLAQ…SSADQSHSMS (64 aa). Positions 46-66 are basic motif; sequence KTMRRLAQNREAARKSRLRKK. Residues 47–142 are a coiled coil; that stretch reads TMRRLAQNRE…RAAVNAHAGD (96 aa). Residues 72–86 form a leucine-zipper region; it reads LENSRLKLTQLEQEL. Positions 111–329 constitute a DOG1 domain; sequence ALAFDTEYAR…RALSSLWLAR (219 aa).

It belongs to the bZIP family. Binds DNA as a dimer.

The protein resides in the nucleus. In terms of biological role, transcriptional activator that binds specifically to the DNA sequence 5'-TGACG-3'. Recognizes ocs elements like the as-1 motif of the cauliflower mosaic virus 35S promoter. Binding to the as-1-like cis elements mediate auxin- and salicylic acid-inducible transcription. Binds to the hexamer motif 5'-ACGTCA-3' of histone gene promoters. This chain is Transcription factor HBP-1b(c38), found in Triticum aestivum (Wheat).